Here is an 85-residue protein sequence, read N- to C-terminus: Neurtoxin 10 (85 aa).

A signal peptide spans 1–23; the sequence is MKFCVAVSLLIIASMAGVISVSG. One can recognise an LCN-type CS-alpha/beta domain in the interval 24–85; that stretch reads YDVYPRDYAE…NFLSVIWKHC (62 aa). Intrachain disulfides connect cysteine 38–cysteine 60, cysteine 46–cysteine 65, and cysteine 50–cysteine 67.

Belongs to the long (3 C-C) scorpion toxin superfamily. Expressed by the venom gland.

It is found in the secreted. This is Neurtoxin 10 from Lychas mucronatus (Chinese swimming scorpion).